The primary structure comprises 494 residues: MGSIRLDEISSIIRKQIEQYNNEVRVGNLGTVLQVGDGIARIHGLDEVMAGELVEFGDGTVGIALNLGSDNVGAVLMGDGLMIQEGSSVRATGKIAQIPVSDAYLGRVVNALAQPIDGKGKISASEFRLIESPAPGIISRRSVYEPLQTGLIAIDSMIPIGRGQRELIIGDRQTGKTAVATDTILNQKSQNVICVYVAIGQRASSVAQVVNTFRERGAMAYTIVVAETADSPATLQYLAPYTGATLAEYFMYKKQHTSIIYDDLSKQAQAYRQMSLLLRRPPGREAYPGDVFYLHSRLLERAAKLSSQLGEGSVTALPIVETQAGDVSAYIPTNAISITDGQIFSSADLFNAGIRPAINVGISVSRVGSAAQIKAMKKVAGKLKLELAQFAELEAFAQFASDLDKATQDQLARGQRLRELLKQSQSAPLTVEEQIATIYTGTNGYLDIFEIAQVRKFLLGLRFYLIKNKPQFGEIIRSTGTFTEEAKALLEEAL.

170–177 (GDRQTGKT) contacts ATP.

Belongs to the ATPase alpha/beta chains family. In terms of assembly, F-type ATPases have 2 components, CF(1) - the catalytic core - and CF(0) - the membrane proton channel. CF(1) has five subunits: alpha(3), beta(3), gamma(1), delta(1), epsilon(1). CF(0) has four main subunits: a, b, b' and c.

The protein resides in the plastid. The protein localises to the chloroplast thylakoid membrane. The enzyme catalyses ATP + H2O + 4 H(+)(in) = ADP + phosphate + 5 H(+)(out). Produces ATP from ADP in the presence of a proton gradient across the membrane. The alpha chain is a regulatory subunit. This Pinus thunbergii (Japanese black pine) protein is ATP synthase subunit alpha, chloroplastic.